We begin with the raw amino-acid sequence, 80 residues long: UPF0512 protein J (80 aa).

The protein belongs to the UPF0512 family.

This Dictyostelium discoideum (Social amoeba) protein is UPF0512 protein J.